Reading from the N-terminus, the 205-residue chain is MHQTHDIQILPAPVIRLIEELNRLPGVGPKTASRLTFFLLRAPDDLPLALAHALTALKQQVQLCSRCYFITQGDLCAICANPARDQRVICVVEEPLDVVAIERTGVYRGLYHVLHGRIAPLEGMNREDIYFDELLDRVRAEPVEEVIIATNPNLEGEATAFHLQRALAPLGVRVTRLARGLPTGGDLEWADPGTLGSALEGRREM.

A C4-type zinc finger spans residues 64–79 (CSRCYFITQGDLCAIC). A Toprim domain is found at 87–182 (RVICVVEEPL…RVTRLARGLP (96 aa)).

The protein belongs to the RecR family.

Its function is as follows. May play a role in DNA repair. It seems to be involved in an RecBC-independent recombinational process of DNA repair. It may act with RecF and RecO. This chain is Recombination protein RecR, found in Roseiflexus sp. (strain RS-1).